We begin with the raw amino-acid sequence, 540 residues long: Glucose-6-phosphate isomerase (540 aa).

The active-site Proton donor is the E350. Residues H381 and K503 contribute to the active site.

Belongs to the GPI family.

It localises to the cytoplasm. It carries out the reaction alpha-D-glucose 6-phosphate = beta-D-fructose 6-phosphate. Its pathway is carbohydrate biosynthesis; gluconeogenesis. The protein operates within carbohydrate degradation; glycolysis; D-glyceraldehyde 3-phosphate and glycerone phosphate from D-glucose: step 2/4. Functionally, catalyzes the reversible isomerization of glucose-6-phosphate to fructose-6-phosphate. The chain is Glucose-6-phosphate isomerase from Burkholderia pseudomallei (strain 668).